The sequence spans 481 residues: Drebrin-like protein (481 aa).

The ADF-H domain maps to 3 to 131 (SLDISDPDIT…DEKAITAALN (129 aa)). The span at 217–227 (YWKQQQAEKQK) shows a compositional bias: basic and acidic residues. A disordered region spans residues 217–423 (YWKQQQAEKQ…PAEEQYDQSG (207 aa)). Positions 228–237 (QQQQQQQQQA) are enriched in low complexity. A compositionally biased stretch (polar residues) spans 248–261 (TVGNKFQEQVSKPT). Positions 291–300 (PPAPSRPAAP) are enriched in pro residues. Acidic residues predominate over residues 325–335 (QYEEPQYEEEQ). The segment covering 336-413 (QQQYEEQPTE…YQEEQQQYEQ (78 aa)) has biased composition (low complexity). The SH3 domain occupies 422–481 (SGYLQAKALYDYNGENDGDLSFREGDIITILDQSDPDGWWQGSLPTGEQGFFPSNFVQQL).

It belongs to the ABP1 family.

Its subcellular location is the cytoplasm. It localises to the cytoskeleton. The protein localises to the cell projection. The protein resides in the pseudopodium. Its function is as follows. Actin-binding adapter protein. Binds to F-actin but is not involved in actin polymerization, capping or bundling. Does not bind G-actin. Controls pseudopodium number and motility in early stages of chemotactic aggregation. This is Drebrin-like protein (abpE-1) from Dictyostelium discoideum (Social amoeba).